The sequence spans 323 residues: Elongation factor P--(R)-beta-lysine ligase (323 aa).

76–78 (SPE) contributes to the substrate binding site. ATP is bound by residues 100-102 (RNE) and Asn-109. Tyr-118 is a substrate binding site. 242–243 (EL) lines the ATP pocket. Glu-249 contributes to the substrate binding site. Gly-298 is an ATP binding site.

This sequence belongs to the class-II aminoacyl-tRNA synthetase family. EpmA subfamily. In terms of assembly, homodimer.

The catalysed reaction is D-beta-lysine + L-lysyl-[protein] + ATP = N(6)-((3R)-3,6-diaminohexanoyl)-L-lysyl-[protein] + AMP + diphosphate + H(+). Functionally, with EpmB is involved in the beta-lysylation step of the post-translational modification of translation elongation factor P (EF-P). Catalyzes the ATP-dependent activation of (R)-beta-lysine produced by EpmB, forming a lysyl-adenylate, from which the beta-lysyl moiety is then transferred to the epsilon-amino group of a conserved specific lysine residue in EF-P. In Haemophilus influenzae (strain ATCC 51907 / DSM 11121 / KW20 / Rd), this protein is Elongation factor P--(R)-beta-lysine ligase.